Consider the following 432-residue polypeptide: uncharacterized protein (432 aa).

Residues 1–18 show a composition bias toward basic residues; it reads MAIGDKRKKNRKNKQNKK. Disordered regions lie at residues 1 to 23, 37 to 56, and 122 to 168; these read MAIG…KNDN, NSNS…NGNG, and STNS…GSSL. Composition is skewed to low complexity over residues 37 to 53, 122 to 147, and 154 to 168; these read NSNS…NNKN, STNS…QQQQ, and ESQS…GSSL. The stretch at 181–226 forms a coiled coil; that stretch reads LNDQLKIVQLEQKIVNLEKEIQRMRNEQNQIHKQNLNQYHELLKQI. Disordered stretches follow at residues 270-290 and 310-432; these read VQPV…KSNG and SSKF…STLR. Residues 274–288 show a composition bias toward low complexity; the sequence is STPSSSSNSLASKKS. Over residues 311-324 the composition is skewed to polar residues; the sequence is SKFAQSNSSPSRVN. Over residues 352 to 378 the composition is skewed to low complexity; the sequence is KKSATTTTTSSSSNNATTTTAKGSTST. Residues 383–414 show a composition bias toward polar residues; sequence ITNSNNIKNSVLSPKSITKPNTPSNIIFSPLS.

This is an uncharacterized protein from Dictyostelium discoideum (Social amoeba).